A 367-amino-acid polypeptide reads, in one-letter code: MSKASDMVRTEVTRPSPYNSGLTITEVMQRYAPARIAKLGSNENPLGPSPTLATMLQAGAEMFRLYPDPAGRELRQAIAAKYGFGEDQIILGNGSEDLLSVISRAVLRPGDSVVTLYPSFPLHEDYATLMGASVKRVTVNDDLTINADALIDAVRERPRMLLFSNPMNPVGSWLSAGDLSKVLDAVSDETLIVVDEAYAEYAEGDDYASSLPDLCERDQPWIVLRTFSKAFGLAGLRIGFGIVGDPELRALLDRVRTPFNANGMAQAAALAALADEEHLAKVVALAKAERTQVESLLRNMGFDVAPSRGNFLFFNCRQNASAFAEGLLREGVIVKPWKQEGFDSYVRVSIGSPAENDHFMAALSQLL.

Position 229 is an N6-(pyridoxal phosphate)lysine (K229).

The protein belongs to the class-II pyridoxal-phosphate-dependent aminotransferase family. Histidinol-phosphate aminotransferase subfamily. As to quaternary structure, homodimer. The cofactor is pyridoxal 5'-phosphate.

The catalysed reaction is L-histidinol phosphate + 2-oxoglutarate = 3-(imidazol-4-yl)-2-oxopropyl phosphate + L-glutamate. It functions in the pathway amino-acid biosynthesis; L-histidine biosynthesis; L-histidine from 5-phospho-alpha-D-ribose 1-diphosphate: step 7/9. This Mesorhizobium japonicum (strain LMG 29417 / CECT 9101 / MAFF 303099) (Mesorhizobium loti (strain MAFF 303099)) protein is Histidinol-phosphate aminotransferase 1 (hisC1).